Consider the following 351-residue polypeptide: Protein RecA (351 aa).

Residue 68-75 (GPESSGKT) coordinates ATP.

This sequence belongs to the RecA family.

Its subcellular location is the cytoplasm. Functionally, can catalyze the hydrolysis of ATP in the presence of single-stranded DNA, the ATP-dependent uptake of single-stranded DNA by duplex DNA, and the ATP-dependent hybridization of homologous single-stranded DNAs. It interacts with LexA causing its activation and leading to its autocatalytic cleavage. The protein is Protein RecA of Thermotoga neapolitana (strain ATCC 49049 / DSM 4359 / NBRC 107923 / NS-E).